We begin with the raw amino-acid sequence, 184 residues long: Flavodoxin FldP (184 aa).

Residues 4–176 (AVVVYFSGYG…TVKLYAARVA (173 aa)) enclose the Flavodoxin-like domain. FMN-binding positions include 10-14 (SGYGH) and 91-147 (GFTN…SVGA).

The protein belongs to the FldP flavodoxin family. The cofactor is FMN.

In terms of biological role, flavodoxins are low-potential electron donors to a number of redox enzymes. FldP protects the cell from oxidative stress and reactive oxygen species (ROS) damage, thereby expanding the capabilities of P.aeruginosa to thrive in hostile environments, and contributes to bacterial survival within the host. In vitro, is able to mediate ferredoxin-NADP(H) reductase (FNR)-driven cytochrome c reduction. This chain is Flavodoxin FldP, found in Pseudomonas aeruginosa (strain UCBPP-PA14).